A 495-amino-acid polypeptide reads, in one-letter code: MSSKVIVTIFGASGDLAKRKLYPSLFRLYQSGNLSKHFAVIGTARRPWSKEYFESVVVESILDLADSTEQAQEFASHFYYQSHDVNDSEHYIALRQLQAELNEKYQAEHNKLFFLSMAPQFFGTIAKHLKSENIVDGKGFERLIVEKPFGTDYATASKLNDELLATFDEEQIFRIDHYLGKEMIQSIFAVRFANLIFENVWNKDFIDNVQITFAERLGVEERGGYYDQSGALRDMVQNHTLQLLSLLAMDKPASFTKDEIRAEKIKVFKNLYHPTDEELKEHFIRGQYRSGKIDGMKYISYRSEPNVNPESTTETFTSGAFFVDSDRFRGVPFFFRTGKRLTEKGTHVNIVFKQMDSIFGEPLAPNILTIYIQPTEGFSLSLNGKQVGEEFNLAPNSLDYRTDATATGASPEPYEKLIYDVLNNNSTNFSHWDEVCASWKLIDRIEKLWAENGAPLHDYKAGSMGPQASFDLLEKFGAKWTWQPDITYRQDGRLE.

NADP(+) contacts are provided by residues 11-18 (GASGDLAK), arginine 45, 84-85 (DV), and lysine 147. The substrate site is built by histidine 177, lysine 181, glutamate 215, and aspartate 234. Histidine 239 serves as the catalytic Proton acceptor. Residues lysine 339 and lysine 344 each coordinate substrate.

It belongs to the glucose-6-phosphate dehydrogenase family.

It catalyses the reaction D-glucose 6-phosphate + NADP(+) = 6-phospho-D-glucono-1,5-lactone + NADPH + H(+). The protein operates within carbohydrate degradation; pentose phosphate pathway; D-ribulose 5-phosphate from D-glucose 6-phosphate (oxidative stage): step 1/3. In terms of biological role, catalyzes the oxidation of glucose 6-phosphate to 6-phosphogluconolactone. This is Glucose-6-phosphate 1-dehydrogenase from Streptococcus pneumoniae serotype 4 (strain ATCC BAA-334 / TIGR4).